The sequence spans 110 residues: Large ribosomal subunit protein uL22 (110 aa).

This sequence belongs to the universal ribosomal protein uL22 family. Part of the 50S ribosomal subunit.

Functionally, this protein binds specifically to 23S rRNA; its binding is stimulated by other ribosomal proteins, e.g. L4, L17, and L20. It is important during the early stages of 50S assembly. It makes multiple contacts with different domains of the 23S rRNA in the assembled 50S subunit and ribosome. In terms of biological role, the globular domain of the protein is located near the polypeptide exit tunnel on the outside of the subunit, while an extended beta-hairpin is found that lines the wall of the exit tunnel in the center of the 70S ribosome. In Bdellovibrio bacteriovorus (strain ATCC 15356 / DSM 50701 / NCIMB 9529 / HD100), this protein is Large ribosomal subunit protein uL22.